The primary structure comprises 85 residues: Large ribosomal subunit protein bL27 (85 aa).

The protein belongs to the bacterial ribosomal protein bL27 family.

The sequence is that of Large ribosomal subunit protein bL27 from Xylella fastidiosa (strain Temecula1 / ATCC 700964).